Here is an 833-residue protein sequence, read N- to C-terminus: Serine/threonine-protein phosphatase 4 regulatory subunit 3A (833 aa).

In terms of domain architecture, WH1 spans 1–100; that stretch reads MTDTRRRVKV…DEIWEKICQV (100 aa). A phosphoserine mark is found at serine 117 and serine 127. N6-acetyllysine is present on lysine 655. Residues 683–694 are compositionally biased toward acidic residues; sequence FNTDEDDMEDGE. Disordered stretches follow at residues 683-712 and 733-833; these read FNTD…IMDP and KTNL…KFDS. Phosphoserine is present on residues serine 698, serine 741, serine 768, serine 771, serine 774, serine 777, and serine 780. Residues 734–751 are compositionally biased toward polar residues; it reads TNLSGRQSPSFKLSLSSG. Low complexity predominate over residues 752–768; the sequence is TKTNLTSQSSTTNLPGS. The segment covering 785–794 has biased composition (polar residues); that stretch reads PKNTSQTAAI. A compositionally biased stretch (acidic residues) spans 806-820; the sequence is YPDDDEDDDEDEDKE.

The protein belongs to the SMEK family. In terms of assembly, serine/threonine-protein phosphatase 4 (PP4) occurs in different assemblies of the catalytic and one or more regulatory subunits. Component of the PP4 complex PPP4C-PPP4R2-PPP4R3A. Interacts with PPP4C; the interaction requires PPP4R2.

It is found in the cytoplasm. The protein resides in the cytoskeleton. It localises to the microtubule organizing center. The protein localises to the centrosome. Its subcellular location is the nucleus. Functionally, regulatory subunit of serine/threonine-protein phosphatase 4. May regulate the activity of PPP4C at centrosomal microtubule organizing centers. The PPP4C-PPP4R2-PPP4R3A PP4 complex specifically dephosphorylates H2AX phosphorylated on 'Ser-140' (gamma-H2AX) generated during DNA replication and required for DNA DSB repair. The sequence is that of Serine/threonine-protein phosphatase 4 regulatory subunit 3A from Homo sapiens (Human).